Reading from the N-terminus, the 850-residue chain is Probable beta-glucosidase J (850 aa).

2 N-linked (GlcNAc...) asparagine glycosylation sites follow: asparagine 43 and asparagine 52. The active site involves aspartate 254. The PA14 domain maps to 423 to 583; the sequence is TGERGYTFRV…DAETAIKQAV (161 aa). An N-linked (GlcNAc...) asparagine glycan is attached at asparagine 508.

Belongs to the glycosyl hydrolase 3 family.

The protein resides in the secreted. The catalysed reaction is Hydrolysis of terminal, non-reducing beta-D-glucosyl residues with release of beta-D-glucose.. Its pathway is glycan metabolism; cellulose degradation. Beta-glucosidases are one of a number of cellulolytic enzymes involved in the degradation of cellulosic biomass. Catalyzes the last step releasing glucose from the inhibitory cellobiose. This is Probable beta-glucosidase J (bglJ) from Emericella nidulans (strain FGSC A4 / ATCC 38163 / CBS 112.46 / NRRL 194 / M139) (Aspergillus nidulans).